We begin with the raw amino-acid sequence, 301 residues long: POU domain, class 6, transcription factor 1 (301 aa).

A run of 2 repeats spans residues 11-17 and 50-56. The segment at 11-56 is 2 X 7 AA repeats of N-A-Q-G-Q-V-I; the sequence is NAQGQVIGALPWVVNSASVATPAPAQSLQVQAVTPQLLLNAQGQVI. Residues 66-88 are disordered; that stretch reads QPVAVRKPSTPESPAKSEVQPIQ. The 75-residue stretch at 139–213 folds into the POU-specific domain; the sequence is EDGINLEEIR…VLEKWLNEAE (75 aa). A DNA-binding region (homeobox) is located at residues 234–293; sequence KRKRRTSFTPQAIEALNAYFEKNPLPTGQEITEIAKELNYDREVVRVWFCNRRQTLKNTS.

This sequence belongs to the POU transcription factor family. Class-6 subfamily. As to expression, in the embryo, widely expressed, with highest levels in the developing brain and spinal cord. In the adult, mostly found in the brain, where it is diffusely expressed with the exception of an enrichment in layer IV of the neocortex. Also found in kidney, lung, heart, adrenal, skin, and placenta. Low levels in spleen, muscle, liver, anterior pituitary, testis and ovary.

The protein localises to the nucleus. Transcription factor that binds preferentially to a variant of the octamer motif (5'-ATGATAAT-3'). In Rattus norvegicus (Rat), this protein is POU domain, class 6, transcription factor 1 (Pou6f1).